The chain runs to 425 residues: Kynurenine/alpha-aminoadipate aminotransferase, mitochondrial (425 aa).

The N-terminal 29 residues, methionine 1–alanine 29, are a transit peptide targeting the mitochondrion. Arginine 20 is a substrate binding site. Lysine 69 is modified (N6-acetyllysine). The substrate site is built by tyrosine 74 and tyrosine 142. A disordered region spans residues tryptophan 178–leucine 208. Lysine 179 carries the post-translational modification N6-acetyllysine. The span at proline 198–leucine 208 shows a compositional bias: polar residues. Asparagine 202 provides a ligand contact to substrate. N6-(pyridoxal phosphate)lysine; alternate is present on lysine 263. N6-acetyllysine; alternate occurs at positions 263 and 339. N6-succinyllysine; alternate is present on residues lysine 263 and lysine 339. A substrate-binding site is contributed by arginine 399. Lysine 422 is subject to N6-acetyllysine.

This sequence belongs to the class-I pyridoxal-phosphate-dependent aminotransferase family. Homodimer. Pyridoxal 5'-phosphate serves as cofactor.

It is found in the mitochondrion. It carries out the reaction L-kynurenine + 2-oxoglutarate = kynurenate + L-glutamate + H2O. The catalysed reaction is L-2-aminoadipate + 2-oxoglutarate = 2-oxoadipate + L-glutamate. The enzyme catalyses glycine + 2-oxoglutarate = glyoxylate + L-glutamate. It catalyses the reaction L-kynurenine + glyoxylate = kynurenate + glycine + H2O. It carries out the reaction 3-hydroxy-L-kynurenine + glyoxylate = xanthurenate + glycine + H2O. The catalysed reaction is 2-oxohexanoate + L-kynurenine = L-2-aminohexanoate + kynurenate + H2O. The enzyme catalyses 3-phenylpyruvate + L-kynurenine = kynurenate + L-phenylalanine + H2O. It catalyses the reaction 4-methylsulfanyl-2-oxobutanoate + L-kynurenine = kynurenate + L-methionine + H2O. It carries out the reaction 2-oxo-3-sulfanylpropanoate + L-kynurenine = kynurenate + L-cysteine + H2O. The catalysed reaction is indole-3-pyruvate + L-kynurenine = kynurenate + L-tryptophan + H2O. The enzyme catalyses 2-oxopentanoate + L-kynurenine = L-2-aminopentanoate + kynurenate + H2O. It catalyses the reaction 4-methyl-2-oxopentanoate + L-kynurenine = kynurenate + L-leucine + H2O. It carries out the reaction glyoxylate + L-methionine = 4-methylsulfanyl-2-oxobutanoate + glycine. The catalysed reaction is L-2-aminoadipate + glyoxylate = 2-oxoadipate + glycine. The enzyme catalyses L-tyrosine + glyoxylate = 3-(4-hydroxyphenyl)pyruvate + glycine. It catalyses the reaction glyoxylate + L-phenylalanine = 3-phenylpyruvate + glycine. It carries out the reaction L-tryptophan + glyoxylate = indole-3-pyruvate + glycine. The catalysed reaction is L-leucine + glyoxylate = 4-methyl-2-oxopentanoate + glycine. The enzyme catalyses 2-oxobutanoate + L-kynurenine = (2S)-2-aminobutanoate + kynurenate + H2O. It catalyses the reaction 2-oxoadipate + L-kynurenine = L-2-aminoadipate + kynurenate + H2O. Its pathway is amino-acid degradation; L-lysine degradation via saccharopine pathway; glutaryl-CoA from L-lysine: step 4/6. In terms of biological role, transaminase with broad substrate specificity. Has transaminase activity towards aminoadipate, kynurenine, methionine and glutamate. Shows activity also towards tryptophan, aspartate and hydroxykynurenine. Accepts a variety of oxo-acids as amino-group acceptors, with a preference for 2-oxoglutarate, 2-oxocaproic acid, phenylpyruvate and alpha-oxo-gamma-methiol butyric acid. Can also use glyoxylate as amino-group acceptor (in vitro). This Bos taurus (Bovine) protein is Kynurenine/alpha-aminoadipate aminotransferase, mitochondrial.